The primary structure comprises 86 residues: Large ribosomal subunit protein uL23c (86 aa).

Belongs to the universal ribosomal protein uL23 family. Part of the 50S ribosomal subunit.

It localises to the plastid. Its subcellular location is the chloroplast. Functionally, binds to 23S rRNA. In Chlorella vulgaris (Green alga), this protein is Large ribosomal subunit protein uL23c (rpl23).